A 233-amino-acid chain; its full sequence is Bcl-2-like protein 1 (233 aa).

The BH4 motif lies at 4-24 (SNRELVVDFLSYKLSQKGYSW). The disordered stretch occupies residues 29–71 (DVEENRTEAPEGTESEAETPSAINGNPSWHLADSPAVNGATGH). A Phosphoserine; by PLK3 modification is found at Ser49. Ser62 carries the phosphoserine; by CDK1 modification. Residues 86 to 100 (VKQALREAGDEFELR) carry the BH3 motif. The BH1 signature appears at 129 to 148 (ELFRDGVNWGRIVAFFSFGG). Residues 180-195 (PWIQENGGWDTFVELY) carry the BH2 motif. The helical transmembrane segment at 210-226 (FNRWFLTGMTLAGVVLL) threads the bilayer.

This sequence belongs to the Bcl-2 family. As to quaternary structure, homodimer. Heterodimers with BAX, BAK or BCL2. Heterodimerization with BAX does not seem to be required for anti-apoptotic activity. Interacts with BCL2L11. Interacts with BAD. Interacts with SIVA1 isoform 1; the interaction inhibits the anti-apoptotic activity. Interacts with BECN1 and PGAM5. Interacts with IKZF3. Interacts with HEBP2. Interacts with BOP. Interacts with p53/TP53 and BBC3; interaction with BBC3 disrupts the interaction with p53/TP53. Interacts with DNM1L and CLTA; DNM1L and BCL2L1 may form a complex in synaptic vesicles that also contains clathrin and MFF. Interacts with ATP5F1A and ATP5F1B; the interactions mediate the association of BCL2L1 with the mitochondrial membrane ATP synthase F(1)F(0) ATP synthase. Interacts with VDAC1. Interacts (via the loop between motifs BH4 and BH3) with NLRP1 (via LRR repeats), but not with NLRP2, NLRP3, NLRP4, PYCARD, nor MEFV. Interacts with BCL2L11 (via BH3). Interacts with RNF183. Interacts with GIMAP3/IAN4. Interacts with GIMAP5 and HSPA8/HSC70; the interaction between HSPA8 and BCL2L1 is impaired in the absence of GIMAP5. Interacts with CLU (isoform 4); this interaction releases and activates BAX and promotes cell death. Post-translationally, proteolytically cleaved by caspases during apoptosis. The cleaved protein, lacking the BH4 motif, has pro-apoptotic activity. In terms of processing, phosphorylated on Ser-62 by CDK1. This phosphorylation is partial in normal mitotic cells, but complete in G2-arrested cells upon DNA-damage, thus promoting subsequent apoptosis probably by triggering caspases-mediated proteolysis. Phosphorylated by PLK3, leading to regulate the G2 checkpoint and progression to cytokinesis during mitosis. Phosphorylation at Ser-49 appears during the S phase and G2, disappears rapidly in early mitosis during prometaphase, metaphase and early anaphase, and re-appears during telophase and cytokinesis. Ubiquitinated by RNF183 during prolonged ER stress, leading to degradation by the proteosome.

Its subcellular location is the mitochondrion membrane. The protein resides in the nucleus membrane. The protein localises to the mitochondrion matrix. It is found in the cytoplasm. It localises to the cytoskeleton. Its subcellular location is the microtubule organizing center. The protein resides in the centrosome. The protein localises to the cytosol. It is found in the cytoplasmic vesicle. It localises to the secretory vesicle. Its subcellular location is the synaptic vesicle membrane. Its function is as follows. Potent inhibitor of cell death. Inhibits activation of caspases. Appears to regulate cell death by blocking the voltage-dependent anion channel (VDAC) by binding to it and preventing the release of the caspase activator, CYC1, from the mitochondrial membrane. Also acts as a regulator of G2 checkpoint and progression to cytokinesis during mitosis. Regulates presynaptic plasticity, including neurotransmitter release and recovery, number of axonal mitochondria as well as size and number of synaptic vesicle clusters. During synaptic stimulation, increases ATP availability from mitochondria through regulation of mitochondrial membrane ATP synthase F(1)F(0) activity and regulates endocytic vesicle retrieval in hippocampal neurons through association with DMN1L and stimulation of its GTPase activity in synaptic vesicles. May attenuate inflammation impairing NLRP1-inflammasome activation, hence CASP1 activation and IL1B release. In Sus scrofa (Pig), this protein is Bcl-2-like protein 1 (BCL2L1).